A 229-amino-acid polypeptide reads, in one-letter code: Potassium/proton antiporter CemA (229 aa).

Helical transmembrane passes span 6–26 (AFIP…ISLC), 107–127 (ILHF…SFWG), and 189–209 (ILSG…KYWI).

Belongs to the CemA family.

Its subcellular location is the plastid. It localises to the chloroplast inner membrane. It carries out the reaction K(+)(in) + H(+)(out) = K(+)(out) + H(+)(in). Functionally, contributes to K(+)/H(+) antiport activity by supporting proton efflux to control proton extrusion and homeostasis in chloroplasts in a light-dependent manner to modulate photosynthesis. Prevents excessive induction of non-photochemical quenching (NPQ) under continuous-light conditions. Indirectly promotes efficient inorganic carbon uptake into chloroplasts. The polypeptide is Potassium/proton antiporter CemA (Nasturtium officinale (Watercress)).